We begin with the raw amino-acid sequence, 255 residues long: uncharacterized protein (255 aa).

The protein belongs to the methyltransferase superfamily.

This is an uncharacterized protein from Bacillus subtilis (strain 168).